A 475-amino-acid chain; its full sequence is Aspartyl/glutamyl-tRNA(Asn/Gln) amidotransferase subunit B (475 aa).

It belongs to the GatB/GatE family. GatB subfamily. In terms of assembly, heterotrimer of A, B and C subunits.

The catalysed reaction is L-glutamyl-tRNA(Gln) + L-glutamine + ATP + H2O = L-glutaminyl-tRNA(Gln) + L-glutamate + ADP + phosphate + H(+). The enzyme catalyses L-aspartyl-tRNA(Asn) + L-glutamine + ATP + H2O = L-asparaginyl-tRNA(Asn) + L-glutamate + ADP + phosphate + 2 H(+). Functionally, allows the formation of correctly charged Asn-tRNA(Asn) or Gln-tRNA(Gln) through the transamidation of misacylated Asp-tRNA(Asn) or Glu-tRNA(Gln) in organisms which lack either or both of asparaginyl-tRNA or glutaminyl-tRNA synthetases. The reaction takes place in the presence of glutamine and ATP through an activated phospho-Asp-tRNA(Asn) or phospho-Glu-tRNA(Gln). In Pelodictyon phaeoclathratiforme (strain DSM 5477 / BU-1), this protein is Aspartyl/glutamyl-tRNA(Asn/Gln) amidotransferase subunit B.